A 322-amino-acid chain; its full sequence is UPF0324 membrane protein BB4178 (322 aa).

10 helical membrane-spanning segments follow: residues 13–35 (FIRQFGFSPLVVGIVCGMLYGNF), 50–69 (FTARRLLRIAVAFYGLNISI), 76–98 (GLPGLAVSVGVVASTLLIGTVAG), 108–127 (TAMLTAAGSAICGAAAVLAF), 139–161 (AVAVATVVLFGTLSMFLYPVIYH), 171–193 (ALGIYIGGTVHEVAQVVGAASNI), 209–231 (VALLVPVLLVLGFWLRASAAAGA), 241–260 (VPWFAIGFLVLAIVNSLDIL), 273–292 (VFVLTMAMTALGIETRFAQI), and 296–318 (GPRVMALGLVLYAWLVFGGYGIV).

Belongs to the UPF0324 family.

Its subcellular location is the cell membrane. This chain is UPF0324 membrane protein BB4178, found in Bordetella bronchiseptica (strain ATCC BAA-588 / NCTC 13252 / RB50) (Alcaligenes bronchisepticus).